A 350-amino-acid chain; its full sequence is Small-conductance mechanosensitive channel MscMJ (350 aa).

The next 5 membrane-spanning stretches (helical) occupy residues 10 to 30 (ISNILIFVVITLLGIFIGKIV), 59 to 79 (LPIIVLVVTLFFYFGLRFLIL), 91 to 111 (VKVVVILSATYFAVKFIDGIF), 130 to 150 (IIKPLKKVVKILTILLGILTA), and 154 to 174 (VGYDITALLAGLGVGGLALAL).

The protein belongs to the MscS (TC 1.A.23) family.

Its subcellular location is the cell membrane. Functionally, small-conductance mechanosensitive channel that opens in response to stretch forces in the membrane lipid bilayer. Exhibits a sixfold preference for cations over anions. Non-rectifying. This is Small-conductance mechanosensitive channel MscMJ from Methanocaldococcus jannaschii (strain ATCC 43067 / DSM 2661 / JAL-1 / JCM 10045 / NBRC 100440) (Methanococcus jannaschii).